The chain runs to 129 residues: MSNIPTELKYASSHEWIRKEEDGSYTVGITEHAQELLGDMVFVELPEVGDTVTAGEDCAVAESVKAASDIYAPISGEVIAVNEALEDSPELVNSSAYGEGWFFRVMPSDESEVDALLDAEGYQAVIDEE.

In terms of domain architecture, Lipoyl-binding spans S24–M106. N6-lipoyllysine is present on K65.

This sequence belongs to the GcvH family. The glycine cleavage system is composed of four proteins: P, T, L and H. It depends on (R)-lipoate as a cofactor.

In terms of biological role, the glycine cleavage system catalyzes the degradation of glycine. The H protein shuttles the methylamine group of glycine from the P protein to the T protein. The chain is Glycine cleavage system H protein from Shewanella baltica (strain OS155 / ATCC BAA-1091).